Reading from the N-terminus, the 314-residue chain is GTPase Era (314 aa).

The Era-type G domain occupies 21–189 (KSGFVGIIGR…QNTLIEQLEP (169 aa)). The G1 stretch occupies residues 29–36 (GRPNVGKS). Residue 29-36 (GRPNVGKS) coordinates GTP. A G2 region spans residues 55–59 (QTTRN). The interval 76–79 (DTPG) is G3. GTP-binding positions include 76–80 (DTPGI) and 138–141 (NKSD). The segment at 138-141 (NKSD) is G4. The G5 stretch occupies residues 168 to 170 (FSA). Residues 212-296 (IREQILQLTR…FLKLFVKVEP (85 aa)) form the KH type-2 domain.

This sequence belongs to the TRAFAC class TrmE-Era-EngA-EngB-Septin-like GTPase superfamily. Era GTPase family. As to quaternary structure, monomer.

It localises to the cytoplasm. It is found in the cell inner membrane. Its function is as follows. An essential GTPase that binds both GDP and GTP, with rapid nucleotide exchange. Plays a role in 16S rRNA processing and 30S ribosomal subunit biogenesis and possibly also in cell cycle regulation and energy metabolism. This Crocosphaera subtropica (strain ATCC 51142 / BH68) (Cyanothece sp. (strain ATCC 51142)) protein is GTPase Era.